Reading from the N-terminus, the 198-residue chain is NADH-quinone oxidoreductase subunit C (198 aa).

It belongs to the complex I 30 kDa subunit family. As to quaternary structure, NDH-1 is composed of 14 different subunits. Subunits NuoB, C, D, E, F, and G constitute the peripheral sector of the complex.

The protein localises to the cell inner membrane. The catalysed reaction is a quinone + NADH + 5 H(+)(in) = a quinol + NAD(+) + 4 H(+)(out). In terms of biological role, NDH-1 shuttles electrons from NADH, via FMN and iron-sulfur (Fe-S) centers, to quinones in the respiratory chain. The immediate electron acceptor for the enzyme in this species is believed to be ubiquinone. Couples the redox reaction to proton translocation (for every two electrons transferred, four hydrogen ions are translocated across the cytoplasmic membrane), and thus conserves the redox energy in a proton gradient. The polypeptide is NADH-quinone oxidoreductase subunit C (Janthinobacterium sp. (strain Marseille) (Minibacterium massiliensis)).